A 619-amino-acid chain; its full sequence is 1-deoxy-D-xylulose-5-phosphate synthase (619 aa).

Residues His-76 and 117–119 (AHS) contribute to the thiamine diphosphate site. Residue Asp-148 participates in Mg(2+) binding. Thiamine diphosphate contacts are provided by residues 149-150 (GA), Asn-177, Tyr-284, and Glu-366. Asn-177 is a binding site for Mg(2+).

The protein belongs to the transketolase family. DXPS subfamily. In terms of assembly, homodimer. Requires Mg(2+) as cofactor. Thiamine diphosphate is required as a cofactor.

It catalyses the reaction D-glyceraldehyde 3-phosphate + pyruvate + H(+) = 1-deoxy-D-xylulose 5-phosphate + CO2. It functions in the pathway metabolic intermediate biosynthesis; 1-deoxy-D-xylulose 5-phosphate biosynthesis; 1-deoxy-D-xylulose 5-phosphate from D-glyceraldehyde 3-phosphate and pyruvate: step 1/1. In terms of biological role, catalyzes the acyloin condensation reaction between C atoms 2 and 3 of pyruvate and glyceraldehyde 3-phosphate to yield 1-deoxy-D-xylulose-5-phosphate (DXP). The chain is 1-deoxy-D-xylulose-5-phosphate synthase from Azoarcus sp. (strain BH72).